Here is a 309-residue protein sequence, read N- to C-terminus: Serine/threonine-protein phosphatase 2A catalytic subunit beta isoform (309 aa).

Residues aspartate 57, histidine 59, aspartate 85, and asparagine 117 each coordinate Mn(2+). The active-site Proton donor is the histidine 118. Mn(2+) is bound by residues histidine 167 and histidine 241. At tyrosine 307 the chain carries Phosphotyrosine. Leucine 309 carries the post-translational modification Leucine methyl ester.

It belongs to the PPP phosphatase family. PP-1 subfamily. As to quaternary structure, PP2A consists of a common heterodimeric core enzyme (composed of a 36 kDa catalytic subunit (subunit C) and a 65 kDa constant regulatory subunit (PR65) (subunit A)) that associates with a variety of regulatory subunits. Proteins that associate with the core dimer include three families of regulatory subunits B (the R2/B/PR55/B55, R3/B''/PR72/PR130/PR59 and R5/B'/B56 families), the 48 kDa variable regulatory subunit, viral proteins, and cell signaling molecules. Binds PPME1. May indirectly interact with SGO1, most probably through regulatory B56 subunits. Found in a complex with at least ARL2, PPP2CB, PPP2R1A, PPP2R2A, PPP2R5E and TBCD. Interacts with TBCD. Interacts with CTTNBP2NL. Interacts with PTPA. Part of the core of STRIPAK complexes composed of PP2A catalytic and scaffolding subunits, the striatins (PP2A regulatory subunits), the striatin-associated proteins MOB4, STRIP1 and STRIP2, PDCD10 and members of the STE20 kinases, such as STK24 and STK26. It depends on Mn(2+) as a cofactor. Post-translationally, reversibly methyl esterified on Leu-309 by leucine carboxyl methyltransferase 1 (LCMT1) and protein phosphatase methylesterase 1 (PPME1). Carboxyl methylation influences the affinity of the catalytic subunit for the different regulatory subunits, thereby modulating the PP2A holoenzyme's substrate specificity, enzyme activity and cellular localization. Phosphorylation of either threonine (by autophosphorylation-activated protein kinase) or tyrosine results in inactivation of the phosphatase. Auto-dephosphorylation has been suggested as a mechanism for reactivation. In terms of processing, may be monoubiquitinated by NOSIP.

The protein localises to the cytoplasm. The protein resides in the nucleus. Its subcellular location is the chromosome. It is found in the centromere. It localises to the cytoskeleton. The protein localises to the spindle pole. The enzyme catalyses O-phospho-L-seryl-[protein] + H2O = L-seryl-[protein] + phosphate. It catalyses the reaction O-phospho-L-threonyl-[protein] + H2O = L-threonyl-[protein] + phosphate. Catalytic subunit of protein phosphatase 2A (PP2A), a serine/threonine phosphatase involved in the regulation of a wide variety of enzymes, signal transduction pathways, and cellular events. PP2A can modulate the activity of phosphorylase B kinase, casein kinase 2, mitogen-stimulated S6 kinase, and MAP-2 kinase. Part of the striatin-interacting phosphatase and kinase (STRIPAK) complexes. STRIPAK complexes have critical roles in protein (de)phosphorylation and are regulators of multiple signaling pathways including Hippo, MAPK, nuclear receptor and cytoskeleton remodeling. Different types of STRIPAK complexes are involved in a variety of biological processes such as cell growth, differentiation, apoptosis, metabolism and immune regulation. The chain is Serine/threonine-protein phosphatase 2A catalytic subunit beta isoform (PPP2CB) from Bos taurus (Bovine).